The primary structure comprises 453 residues: tRNA modification GTPase MnmE (453 aa).

(6S)-5-formyl-5,6,7,8-tetrahydrofolate contacts are provided by arginine 28, glutamate 86, and lysine 125. The region spanning 221–375 (GIKIAIVGEP…LIKYLEETSL (155 aa)) is the TrmE-type G domain. Asparagine 231 lines the K(+) pocket. GTP-binding positions include 231 to 236 (NAGKSS), 250 to 256 (TNIPGTT), and 276 to 279 (DTAG). Serine 235 contributes to the Mg(2+) binding site. The K(+) site is built by threonine 250, isoleucine 252, and threonine 255. Threonine 256 is a binding site for Mg(2+). Lysine 453 lines the (6S)-5-formyl-5,6,7,8-tetrahydrofolate pocket.

Belongs to the TRAFAC class TrmE-Era-EngA-EngB-Septin-like GTPase superfamily. TrmE GTPase family. Homodimer. Heterotetramer of two MnmE and two MnmG subunits. It depends on K(+) as a cofactor.

It localises to the cytoplasm. In terms of biological role, exhibits a very high intrinsic GTPase hydrolysis rate. Involved in the addition of a carboxymethylaminomethyl (cmnm) group at the wobble position (U34) of certain tRNAs, forming tRNA-cmnm(5)s(2)U34. The chain is tRNA modification GTPase MnmE from Mycoplasmoides gallisepticum (strain R(low / passage 15 / clone 2)) (Mycoplasma gallisepticum).